Reading from the N-terminus, the 631-residue chain is Chaperone protein HtpG (631 aa).

The interval 1–342 (MSEQTANKET…SNDLPLNVSR (342 aa)) is a; substrate-binding. The interval 343–559 (EILQDNKVTQ…DFEMGTQMAK (217 aa)) is b. The interval 560-631 (LLEAAGQAAP…LSAMNQLLAK (72 aa)) is c.

It belongs to the heat shock protein 90 family. In terms of assembly, homodimer.

It is found in the cytoplasm. Its function is as follows. Molecular chaperone. Has ATPase activity. This Aliivibrio fischeri (strain ATCC 700601 / ES114) (Vibrio fischeri) protein is Chaperone protein HtpG.